Here is a 78-residue protein sequence, read N- to C-terminus: U29-theraphotoxin-Cg1a (78 aa).

The N-terminal stretch at 1–19 (MRYQTVFWILLIALCTVNP) is a signal peptide. 4 disulfide bridges follow: C42/C56, C49/C60, C55/C77, and C67/C73.

It belongs to the neurotoxin 13 (insecticidal toxin ABC) family. 03 (JZTX-59) subfamily. Expressed by the venom gland.

The protein localises to the secreted. Probable ion channel inhibitor. The protein is U29-theraphotoxin-Cg1a of Chilobrachys guangxiensis (Chinese earth tiger tarantula).